The chain runs to 516 residues: DNA topoisomerase large subunit (516 aa).

V128 to G136 provides a ligand contact to ATP. The DNA-binding element occupies A369–A400.

This sequence belongs to the type II topoisomerase family. In terms of assembly, part of the DNA topoisomerase complex made of gp39, gp52 and gp60. The cofactor is Mg(2+).

The catalysed reaction is ATP-dependent breakage, passage and rejoining of double-stranded DNA.. Large subunit of the DNA topoisomerase that untwists superhelical DNA. Controls of topological states of double-stranded DNA by transient breakage and subsequent rejoining of DNA strands. In Escherichia coli (Bacteriophage T4), this protein is DNA topoisomerase large subunit (39).